Consider the following 217-residue polypeptide: Probable transaldolase (217 aa).

The Schiff-base intermediate with substrate role is filled by Lys83.

It belongs to the transaldolase family. Type 3B subfamily.

It localises to the cytoplasm. The enzyme catalyses D-sedoheptulose 7-phosphate + D-glyceraldehyde 3-phosphate = D-erythrose 4-phosphate + beta-D-fructose 6-phosphate. Its pathway is carbohydrate degradation; pentose phosphate pathway; D-glyceraldehyde 3-phosphate and beta-D-fructose 6-phosphate from D-ribose 5-phosphate and D-xylulose 5-phosphate (non-oxidative stage): step 2/3. In terms of biological role, transaldolase is important for the balance of metabolites in the pentose-phosphate pathway. This Lactiplantibacillus plantarum (strain ATCC BAA-793 / NCIMB 8826 / WCFS1) (Lactobacillus plantarum) protein is Probable transaldolase.